Here is a 155-residue protein sequence, read N- to C-terminus: Small ribosomal subunit protein uS7 (155 aa).

This sequence belongs to the universal ribosomal protein uS7 family. In terms of assembly, part of the 30S ribosomal subunit. Contacts proteins S9 and S11.

One of the primary rRNA binding proteins, it binds directly to 16S rRNA where it nucleates assembly of the head domain of the 30S subunit. Is located at the subunit interface close to the decoding center, probably blocks exit of the E-site tRNA. This Corynebacterium diphtheriae (strain ATCC 700971 / NCTC 13129 / Biotype gravis) protein is Small ribosomal subunit protein uS7.